The following is a 352-amino-acid chain: Inner membrane protein YeeA (352 aa).

The Cytoplasmic portion of the chain corresponds to 1–25 (MRADKSLSPFEIRVYRHYRIVHGTR). The next 2 membrane-spanning stretches (helical) occupy residues 26 to 46 (VALA…PEST) and 47 to 67 (WPLV…NVVP). Residue arginine 68 is a topological domain, cytoplasmic. Residues 69–89 (AFERIGGTVLGSILGLIALQL) traverse the membrane as a helical segment. Residue glutamate 90 is a topological domain, periplasmic. Residues 91-111 (LISLPLMLVWCAAAMFLCGWL) form a helical membrane-spanning segment. At 112-117 (ALGKKP) the chain is on the cytoplasmic side. Residues 118–138 (YQGLLIGVTLAIVVGSPTGEI) form a helical membrane-spanning segment. Topologically, residues 139–147 (DTALWRSGD) are periplasmic. The helical transmembrane segment at 148–168 (VILGSLLAMLFTGIWPQRAFI) threads the bilayer. At 169 to 352 (HWRIQLAKSL…SNLICRALRK (184 aa)) the chain is on the cytoplasmic side.

Its subcellular location is the cell inner membrane. This chain is Inner membrane protein YeeA (yeeA), found in Escherichia coli (strain K12).